The chain runs to 563 residues: MAFNFNWSPLTADAEFYQRAQEMLTAALNKSPKPPIIKDDILVNELNLGSVPPDLEILEIGDLAEDRFRGIFKMCYSGDAFLTLKTRVQANPLNNHLFSKPSFTSPQPLAADAGLTIPLQITLSEIKLSAFIIVVFSKQKGLTLVFRNDPLESLKVSSTFDSIPFIKDYLQKEIEQQLRTLMMDELPAIIHRLSLRLWCPEYRGKEDQEMAEAVKKTKDEVAIDPFASPPQDAVDARGNVLDASEISNLSLDGGSEIHSLFSQKNLLRLAALTNSHRTLSLFTPSIRDAVFRAWAPSERGDSAGTTTPATTSLHRPQSSLGGQSTTYTFSNRSSDDGHGSMPSRPSLVNMNSATTGLSLGANRGSRSHTTRKKKNRVVNLRKSKTTDNVSESGESETASITAASEPIVQSRIPEEPEDIPVTPPPGKVRFNSIDLGDSPKKLQPSRSITPEQGNMNQIPTLTVEPSTPIHSENQKRPAYNQSSFTSYTSEKSATTPPHTQFSYPHGLHFSATESPSGILEQAWIMKMASELARRRHDKTAREGFWSTSSNGDDAPPAYEPKAL.

Residues 1-195 (MAFNFNWSPL…LPAIIHRLSL (195 aa)) enclose the SMP-LTD domain. Disordered regions lie at residues 298 to 460 (ERGD…QIPT) and 535 to 563 (RHDKTAREGFWSTSSNGDDAPPAYEPKAL). Composition is skewed to polar residues over residues 303–332 (AGTTTPATTSLHRPQSSLGGQSTTYTFSNR) and 346–357 (SLVNMNSATTGL). Basic residues predominate over residues 365 to 383 (SRSHTTRKKKNRVVNLRKS). Composition is skewed to polar residues over residues 386–402 (TDNVSESGESETASITA) and 444–460 (PSRSITPEQGNMNQIPT).

This sequence belongs to the MDM34 family. In terms of assembly, component of the ER-mitochondria encounter structure (ERMES) or MDM complex, composed of mmm1, mdm10, mdm12 and mdm34.

It localises to the mitochondrion outer membrane. Its function is as follows. Component of the ERMES/MDM complex, which serves as a molecular tether to connect the endoplasmic reticulum (ER) and mitochondria. Components of this complex are involved in the control of mitochondrial shape and protein biogenesis, and function in nonvesicular lipid trafficking between the ER and mitochondria. Mdm34 is required for the interaction of the ER-resident membrane protein mmm1 and the outer mitochondrial membrane-resident beta-barrel protein mdm10. The polypeptide is Mitochondrial distribution and morphology protein 34 (Sclerotinia sclerotiorum (strain ATCC 18683 / 1980 / Ss-1) (White mold)).